The primary structure comprises 97 residues: Co-chaperonin GroES (97 aa).

The protein belongs to the GroES chaperonin family. Heptamer of 7 subunits arranged in a ring. Interacts with the chaperonin GroEL.

The protein resides in the cytoplasm. Together with the chaperonin GroEL, plays an essential role in assisting protein folding. The GroEL-GroES system forms a nano-cage that allows encapsulation of the non-native substrate proteins and provides a physical environment optimized to promote and accelerate protein folding. GroES binds to the apical surface of the GroEL ring, thereby capping the opening of the GroEL channel. This is Co-chaperonin GroES from Buchnera aphidicola subsp. Thelaxes suberi.